Consider the following 441-residue polypeptide: Acetyltransferase TRI7 (441 aa).

7 helical membrane-spanning segments follow: residues Gly-14–Ile-34, Ser-75–Thr-95, Ile-158–Ile-178, Ile-306–Gly-326, Leu-336–Cys-356, Leu-377–His-397, and Thr-421–Val-441.

It belongs to the wax synthase family.

The protein localises to the membrane. It functions in the pathway sesquiterpene biosynthesis; trichothecene biosynthesis. In terms of biological role, acetyltransferase; part of the core gene cluster that mediates the biosynthesis of trichothecenes, a very large family of chemically related bicyclic sesquiterpene compounds acting as mycotoxins, including T2-toxin. The biosynthesis of trichothecenes begins with the cyclization of farnesyl diphosphate to trichodiene and is catalyzed by the trichodiene synthase TRI5. Trichodiene undergoes a series of oxygenations catalyzed by the cytochrome P450 monooxygenase TRI4. TRI4 controls the addition of four oxygens at C-2, C-3, C-11, and the C-12, C-13-epoxide to form the intermediate isotrichotriol. Isotrichotriol then undergoes a non-enzymatic isomerization and cyclization to form isotrichodermol. During this process, the oxygen at the C-2 position becomes the pyran ring oxygen and the hydroxyl group at C-11 is lost. More complex type A trichothecenes are built by modifying isotrichodermol through a series of paired hydroxylation and acetylation or acylation steps. Isotrichodermol is converted to isotrichodermin by the acetyltransferase TRI101. TRI101 encodes a C-3 transacetylase that acts as a self-protection or resistance factor during biosynthesis and that the presence of a free C-3 hydroxyl group is a key component of Fusarium trichothecene phytotoxicity. A second hydroxyl group is added to C-15 by the trichothecene C-15 hydroxylase TRI11, producing 15-decalonectrin, which is then acetylated by TRI3, producing calonectrin. A third hydroxyl group is added at C-4 by the cytochrome P450 monooxygenase TRI13, converting calonectrin to 3,15-diacetoxyspirpenol, which is subsequently acetylated by the acetyltransferase TRI7. A fourth hydroxyl group is added to C-8 by the cytochrome P450 monooxygenase TRI1, followed by the addition of an isovaleryl moiety by TRI16. Finally, the acetyl group is removed from the C-3 position by the trichothecene C-3 esterase TRI8 to produce T-2 toxin. The sequence is that of Acetyltransferase TRI7 from Fusarium sporotrichioides.